Reading from the N-terminus, the 284-residue chain is MGQIIDGEKLAKEIQERVTTEVAELAKIDKKPGLAVVLVGDNQASRTYVRNKQKRTEEAGMKSVLIELPETVSEEKLLEVVEELNTDDTIHGILVQLPLPKHISEEKVIDTISYDKDVDGFHPVNVGNLFIGKDSFVPCTPAGIIELIKSTGTQIEGKRAVVIGRSNIVGKPVAQLLLNENATVTIAHSRTKNLPEVAKEADILVVATGLAKFVKKEYIKPGAIVIDVGMDRDENNKLCGDVDFDDVIEEAGFITPVPGGVGPMTITMLLANTLKAAKRIWKMN.

NADP(+) contacts are provided by residues 164–166 (GRS) and Ser-189.

Belongs to the tetrahydrofolate dehydrogenase/cyclohydrolase family. As to quaternary structure, homodimer.

It catalyses the reaction (6R)-5,10-methylene-5,6,7,8-tetrahydrofolate + NADP(+) = (6R)-5,10-methenyltetrahydrofolate + NADPH. The enzyme catalyses (6R)-5,10-methenyltetrahydrofolate + H2O = (6R)-10-formyltetrahydrofolate + H(+). Its pathway is one-carbon metabolism; tetrahydrofolate interconversion. Its function is as follows. Catalyzes the oxidation of 5,10-methylenetetrahydrofolate to 5,10-methenyltetrahydrofolate and then the hydrolysis of 5,10-methenyltetrahydrofolate to 10-formyltetrahydrofolate. The sequence is that of Bifunctional protein FolD from Listeria welshimeri serovar 6b (strain ATCC 35897 / DSM 20650 / CCUG 15529 / CIP 8149 / NCTC 11857 / SLCC 5334 / V8).